The following is a 214-amino-acid chain: tRNA (guanine-N(7)-)-methyltransferase (214 aa).

Positions 44, 69, 96, and 118 each coordinate S-adenosyl-L-methionine. D118 is an active-site residue. Position 122 (K122) interacts with substrate. An interaction with RNA region spans residues 124–129 (RHEKRR). Residues D154 and 192–195 (TEYE) contribute to the substrate site.

The protein belongs to the class I-like SAM-binding methyltransferase superfamily. TrmB family.

The catalysed reaction is guanosine(46) in tRNA + S-adenosyl-L-methionine = N(7)-methylguanosine(46) in tRNA + S-adenosyl-L-homocysteine. It participates in tRNA modification; N(7)-methylguanine-tRNA biosynthesis. In terms of biological role, catalyzes the formation of N(7)-methylguanine at position 46 (m7G46) in tRNA. The protein is tRNA (guanine-N(7)-)-methyltransferase of Lactiplantibacillus plantarum (strain ATCC BAA-793 / NCIMB 8826 / WCFS1) (Lactobacillus plantarum).